The sequence spans 556 residues: Calcium-dependent protein kinase 5 (556 aa).

Positions 1-40 (MGNSCRGSFKDKLDEGDNNKPEDYSKTSTTNLSSNSDHSP) are disordered. Residue Gly-2 is the site of N-myristoyl glycine attachment. Residues 8-25 (SFKDKLDEGDNNKPEDYS) are compositionally biased toward basic and acidic residues. Residues 26–39 (KTSTTNLSSNSDHS) are compositionally biased toward low complexity. The region spanning 97–355 (YTLSRKLGQG…AHEVLRHPWI (259 aa)) is the Protein kinase domain. ATP-binding positions include 103-111 (LGQGQFGTT) and Lys-126. Asp-221 (proton acceptor) is an active-site residue. Ser-261 is subject to Phosphoserine. The tract at residues 361–391 (APDRALDPAVLSRLKQFSAMNKLKKMALKVI) is autoinhibitory domain. 4 consecutive EF-hand domains span residues 398–433 (EEIA…YGST), 434–469 (LKDT…LNKL), 470–505 (EREE…HGMA), and 509–539 (LEDI…GNAG). Ca(2+) is bound by residues Asp-411, Asp-413, Ser-415, Glu-422, Asp-447, Asp-449, Ser-451, Thr-453, Glu-458, Asp-483, Asp-485, Ser-487, Glu-494, Asp-517, Asn-519, Asp-521, Lys-523, and Glu-528.

It belongs to the protein kinase superfamily. Ser/Thr protein kinase family. CDPK subfamily.

It localises to the membrane. The enzyme catalyses L-seryl-[protein] + ATP = O-phospho-L-seryl-[protein] + ADP + H(+). It carries out the reaction L-threonyl-[protein] + ATP = O-phospho-L-threonyl-[protein] + ADP + H(+). Its activity is regulated as follows. Activated by calcium. Autophosphorylation may play an important role in the regulation of the kinase activity. Functionally, may play a role in signal transduction pathways that involve calcium as a second messenger. This is Calcium-dependent protein kinase 5 (CPK5) from Arabidopsis thaliana (Mouse-ear cress).